Here is a 307-residue protein sequence, read N- to C-terminus: Homoserine kinase (307 aa).

Residue 92 to 102 coordinates ATP; the sequence is PLARGLGSSAT.

This sequence belongs to the GHMP kinase family. Homoserine kinase subfamily.

It is found in the cytoplasm. It catalyses the reaction L-homoserine + ATP = O-phospho-L-homoserine + ADP + H(+). It participates in amino-acid biosynthesis; L-threonine biosynthesis; L-threonine from L-aspartate: step 4/5. Its function is as follows. Catalyzes the ATP-dependent phosphorylation of L-homoserine to L-homoserine phosphate. This Microchaete diplosiphon (Fremyella diplosiphon) protein is Homoserine kinase (thrB).